The primary structure comprises 319 residues: HTH-type transcriptional regulator YidZ (319 aa).

One can recognise an HTH lysR-type domain in the interval 8–65 (LDLNLLLCLQLLMQERSVTKAAKRMNVTPSAVSKSLAKLRAWFDDPLFVNSPLGLSPT). The H-T-H motif DNA-binding region spans 25 to 44 (VTKAAKRMNVTPSAVSKSLA).

The protein belongs to the LysR transcriptional regulatory family.

In terms of biological role, involved in anaerobic NO protection. This Escherichia coli O139:H28 (strain E24377A / ETEC) protein is HTH-type transcriptional regulator YidZ.